A 40-amino-acid polypeptide reads, in one-letter code: Photosystem II reaction center protein J (40 aa).

The helical transmembrane segment at 8–28 threads the bilayer; it reads IPLWLIGTVTGIIVIGLLGVF.

Belongs to the PsbJ family. In terms of assembly, PSII is composed of 1 copy each of membrane proteins PsbA, PsbB, PsbC, PsbD, PsbE, PsbF, PsbH, PsbI, PsbJ, PsbK, PsbL, PsbM, PsbT, PsbX, PsbY, PsbZ, Psb30/Ycf12, at least 3 peripheral proteins of the oxygen-evolving complex and a large number of cofactors. It forms dimeric complexes.

The protein resides in the plastid. The protein localises to the chloroplast thylakoid membrane. Functionally, one of the components of the core complex of photosystem II (PSII). PSII is a light-driven water:plastoquinone oxidoreductase that uses light energy to abstract electrons from H(2)O, generating O(2) and a proton gradient subsequently used for ATP formation. It consists of a core antenna complex that captures photons, and an electron transfer chain that converts photonic excitation into a charge separation. The sequence is that of Photosystem II reaction center protein J from Pinus thunbergii (Japanese black pine).